The sequence spans 634 residues: Putative peptidoglycan O-acetyltransferase YrhL (634 aa).

11 helical membrane-spanning segments follow: residues 10–30 (YIPG…TYHL), 38–58 (GFIG…SILL), 79–99 (RLLP…VLFD), 110–130 (AISS…LSYF), 145–165 (LAIE…GMYI), 172–192 (LAAV…VLYE), 244–264 (FLAF…EPFL), 270–290 (LFIS…SSFL), 307–327 (YGIY…QEIG), 329–349 (PVFW…ELSY), and 385–405 (MSIG…SGLA). Residues 413–481 (KWTYSSQETN…SQQLKKPADT (69 aa)) are disordered. A compositionally biased stretch (polar residues) spans 414–429 (WTYSSQETNADTSQAS). Composition is skewed to basic and acidic residues over residues 430–447 (GDKK…EQKT) and 455–470 (KENK…KKDT).

It belongs to the acyltransferase 3 family.

The protein localises to the cell membrane. This Bacillus subtilis (strain 168) protein is Putative peptidoglycan O-acetyltransferase YrhL (yrhL).